Reading from the N-terminus, the 364-residue chain is Dihydroorotate dehydrogenase (quinone) (364 aa).

FMN contacts are provided by residues 61 to 65 (AGFDK) and Ser-85. Lys-65 contributes to the substrate binding site. 110-114 (NRMGF) provides a ligand contact to substrate. FMN contacts are provided by Asn-139 and Asn-170. Asn-170 lines the substrate pocket. The active-site Nucleophile is Ser-173. Residue Asn-175 coordinates substrate. Residues Lys-214 and Ser-242 each coordinate FMN. 243–244 (NT) is a binding site for substrate. FMN contacts are provided by residues Gly-266, Gly-295, and 316-317 (YS).

The protein belongs to the dihydroorotate dehydrogenase family. Type 2 subfamily. As to quaternary structure, monomer. The cofactor is FMN.

It localises to the cell membrane. It catalyses the reaction (S)-dihydroorotate + a quinone = orotate + a quinol. Its pathway is pyrimidine metabolism; UMP biosynthesis via de novo pathway; orotate from (S)-dihydroorotate (quinone route): step 1/1. In terms of biological role, catalyzes the conversion of dihydroorotate to orotate with quinone as electron acceptor. The protein is Dihydroorotate dehydrogenase (quinone) of Bradyrhizobium sp. (strain ORS 278).